The primary structure comprises 261 residues: MRPDGRKPTQLRPVKIIRDFNIYAEGSVLIEMGNTKVIITASIEEKVPPFLRGTGQGWITAEYAMLPRSTESRSIREVVRGAPSGRTQEIQRLIGRSLRGVVDLKKLGERTLWVDCDVIQADGGTRVASITGAFIAVADAMIKLTESGKVRQNPLKDYVAAISTGIVGNEVVLDLNFKEDSSAKVDMNLVMTGSGNFVEVQATGEEYSFTQQEFDKMLEYGKLGINKLIHIQKKFIEGMPSIGHWKRLSIKEFSYTDTGGN.

Residues R86 and 124 to 126 (GTR) contribute to the phosphate site.

The protein belongs to the RNase PH family. In terms of assembly, homohexameric ring arranged as a trimer of dimers.

It catalyses the reaction tRNA(n+1) + phosphate = tRNA(n) + a ribonucleoside 5'-diphosphate. In terms of biological role, phosphorolytic 3'-5' exoribonuclease that plays an important role in tRNA 3'-end maturation. Removes nucleotide residues following the 3'-CCA terminus of tRNAs; can also add nucleotides to the ends of RNA molecules by using nucleoside diphosphates as substrates, but this may not be physiologically important. Probably plays a role in initiation of 16S rRNA degradation (leading to ribosome degradation) during starvation. The polypeptide is Ribonuclease PH (Persephonella marina (strain DSM 14350 / EX-H1)).